A 444-amino-acid polypeptide reads, in one-letter code: Methylenetetrahydrofolate--tRNA-(uracil-5-)-methyltransferase TrmFO (444 aa).

Position 9-14 (9-14 (GAGLAG)) interacts with FAD.

Belongs to the MnmG family. TrmFO subfamily. Requires FAD as cofactor.

The protein localises to the cytoplasm. The enzyme catalyses uridine(54) in tRNA + (6R)-5,10-methylene-5,6,7,8-tetrahydrofolate + NADH + H(+) = 5-methyluridine(54) in tRNA + (6S)-5,6,7,8-tetrahydrofolate + NAD(+). The catalysed reaction is uridine(54) in tRNA + (6R)-5,10-methylene-5,6,7,8-tetrahydrofolate + NADPH + H(+) = 5-methyluridine(54) in tRNA + (6S)-5,6,7,8-tetrahydrofolate + NADP(+). Functionally, catalyzes the folate-dependent formation of 5-methyl-uridine at position 54 (M-5-U54) in all tRNAs. This Koribacter versatilis (strain Ellin345) protein is Methylenetetrahydrofolate--tRNA-(uracil-5-)-methyltransferase TrmFO.